The following is a 191-amino-acid chain: Leucyl/phenylalanyl-tRNA--protein transferase (191 aa).

This sequence belongs to the L/F-transferase family.

The protein resides in the cytoplasm. The catalysed reaction is N-terminal L-lysyl-[protein] + L-leucyl-tRNA(Leu) = N-terminal L-leucyl-L-lysyl-[protein] + tRNA(Leu) + H(+). It carries out the reaction N-terminal L-arginyl-[protein] + L-leucyl-tRNA(Leu) = N-terminal L-leucyl-L-arginyl-[protein] + tRNA(Leu) + H(+). The enzyme catalyses L-phenylalanyl-tRNA(Phe) + an N-terminal L-alpha-aminoacyl-[protein] = an N-terminal L-phenylalanyl-L-alpha-aminoacyl-[protein] + tRNA(Phe). Its function is as follows. Functions in the N-end rule pathway of protein degradation where it conjugates Leu, Phe and, less efficiently, Met from aminoacyl-tRNAs to the N-termini of proteins containing an N-terminal arginine or lysine. The chain is Leucyl/phenylalanyl-tRNA--protein transferase from Herpetosiphon aurantiacus (strain ATCC 23779 / DSM 785 / 114-95).